We begin with the raw amino-acid sequence, 427 residues long: Serine/arginine (SR)-type shuttling mRNA binding protein GBP2 (427 aa).

The interval 1 to 101 (MERELGMYGN…GRGGGRGRTL (101 aa)) is disordered. Over residues 22–32 (RLSDDRDRYDD) the composition is skewed to basic and acidic residues. Phosphoserine is present on S24. Residues 35–44 (DSSSNNGNGS) show a composition bias toward low complexity. Residues 50–60 (DRGSRFNDRYD) show a composition bias toward basic and acidic residues. RRM domains lie at 122–198 (NSIF…QDNP) and 219–296 (FEVF…EGRF). T130 is subject to Phosphothreonine. Residues 300–317 (KNNDRYNQRREDLEDTRG) show a composition bias toward basic and acidic residues. A disordered region spans residues 300–319 (KNNDRYNQRREDLEDTRGTE). The RRM 3 domain maps to 349-426 (CFIYCSNLPF…CSLQISYARR (78 aa)).

Methylated by HMT1.

It localises to the cytoplasm. It is found in the nucleus. The protein resides in the chromosome. The protein localises to the telomere. Its subcellular location is the P-body. It localises to the stress granule. In terms of biological role, binds to intron-containing transcripts and is involved in quality control for the export of spliced mRNAs from the nucleus. Binds to pre-mRNAs until splicing is completed or until faulty mRNAs are degraded. On correctly spliced mRNAs, GBP2 and HRB1 recruit MEX67 to allow nuclear export. On faulty mRNAs, GBP2 and HRB1 associate with the TRAMP complex that guides those pre-mRNAs to the exosome for degradation. Binds single-stranded telomeric sequences of the type (TG[1-3])n in vitro. Influences the localization of RAP1 in the nuclei. Involved in modulating telomere length. The chain is Serine/arginine (SR)-type shuttling mRNA binding protein GBP2 from Saccharomyces cerevisiae (strain ATCC 204508 / S288c) (Baker's yeast).